Consider the following 287-residue polypeptide: Ribosomal RNA small subunit methyltransferase I (287 aa).

It belongs to the methyltransferase superfamily. RsmI family.

The protein resides in the cytoplasm. It catalyses the reaction cytidine(1402) in 16S rRNA + S-adenosyl-L-methionine = 2'-O-methylcytidine(1402) in 16S rRNA + S-adenosyl-L-homocysteine + H(+). Its function is as follows. Catalyzes the 2'-O-methylation of the ribose of cytidine 1402 (C1402) in 16S rRNA. This Streptococcus pyogenes serotype M3 (strain ATCC BAA-595 / MGAS315) protein is Ribosomal RNA small subunit methyltransferase I.